The chain runs to 205 residues: dITP/XTP pyrophosphatase (205 aa).

16–21 (TGNPGK) lines the substrate pocket. Mg(2+) is bound by residues Glu-48 and Asp-77. Asp-77 acts as the Proton acceptor in catalysis. Substrate contacts are provided by residues Ser-78, 162–165 (FGYD), Lys-185, and 190–191 (HR).

This sequence belongs to the HAM1 NTPase family. Homodimer. Mg(2+) serves as cofactor.

The enzyme catalyses XTP + H2O = XMP + diphosphate + H(+). The catalysed reaction is dITP + H2O = dIMP + diphosphate + H(+). It catalyses the reaction ITP + H2O = IMP + diphosphate + H(+). Its function is as follows. Pyrophosphatase that catalyzes the hydrolysis of nucleoside triphosphates to their monophosphate derivatives, with a high preference for the non-canonical purine nucleotides XTP (xanthosine triphosphate), dITP (deoxyinosine triphosphate) and ITP. Seems to function as a house-cleaning enzyme that removes non-canonical purine nucleotides from the nucleotide pool, thus preventing their incorporation into DNA/RNA and avoiding chromosomal lesions. This is dITP/XTP pyrophosphatase from Erwinia tasmaniensis (strain DSM 17950 / CFBP 7177 / CIP 109463 / NCPPB 4357 / Et1/99).